The sequence spans 531 residues: Polypyrimidine tract-binding protein 2 (531 aa).

The residue at position 1 (Met-1) is an N-acetylmethionine. Ser-26 and Ser-27 each carry phosphoserine. 2 RRM domains span residues 59–133 (RVLH…YSNH) and 181–257 (LRII…FSKL). A Phosphoserine modification is found at Ser-308. RRM domains are found at residues 338–412 (TVLL…LSKH) and 455–529 (ATLH…FSKS).

As to quaternary structure, monomer. Interacts with NOVA1; the interaction is direct. Identified in a mRNP complex, at least composed of DHX9, DDX3X, ELAVL1, HNRNPU, IGF2BP1, ILF3, PABPC1, PCBP2, PTBP2, STAU1, STAU2, SYNCRIP and YBX1. Part of a ternary complex containing KHSRP and HNRPH1. Interacts with NOVA2; the interaction is direct.

It is found in the nucleus. RNA-binding protein which binds to intronic polypyrimidine tracts and mediates negative regulation of exons splicing. May antagonize in a tissue-specific manner the ability of NOVA1 to activate exon selection. In addition to its function in pre-mRNA splicing, plays also a role in the regulation of translation. This chain is Polypyrimidine tract-binding protein 2, found in Rattus norvegicus (Rat).